The sequence spans 793 residues: Acetyl-CoA decarbonylase/synthase complex subunit alpha (793 aa).

[4Fe-4S] cluster-binding residues include cysteine 55, cysteine 58, cysteine 63, and cysteine 73. Residue histidine 96 participates in CO binding. Histidine 229, cysteine 257, and cysteine 309 together coordinate [Ni-4Fe-4S] cluster. 4Fe-4S ferredoxin-type domains are found at residues 393–422 (EQQF…ISEM) and 432–461 (EPFS…LKLY). Cysteine 403, cysteine 406, cysteine 409, cysteine 413, cysteine 441, cysteine 444, cysteine 447, and cysteine 451 together coordinate [4Fe-4S] cluster. [Ni-4Fe-4S] cluster is bound by residues cysteine 509, cysteine 538, and cysteine 573.

It belongs to the Ni-containing carbon monoxide dehydrogenase family. Heterotetramer of two alpha and two epsilon subunits. The ACDS complex is made up of alpha, epsilon, beta, gamma and delta subunits with a probable stoichiometry of (alpha(2)epsilon(2))(4)-beta(8)-(gamma(1)delta(1))(8). It depends on [4Fe-4S] cluster as a cofactor. [Ni-4Fe-4S] cluster serves as cofactor.

The catalysed reaction is CO + 2 oxidized [2Fe-2S]-[ferredoxin] + H2O = 2 reduced [2Fe-2S]-[ferredoxin] + CO2 + 2 H(+). Its function is as follows. Part of the ACDS complex that catalyzes the reversible cleavage of acetyl-CoA, allowing autotrophic growth from CO(2). The alpha-epsilon subcomponent functions as a carbon monoxide dehydrogenase. The protein is Acetyl-CoA decarbonylase/synthase complex subunit alpha of Methanothrix soehngenii (Methanosaeta concilii).